Reading from the N-terminus, the 263-residue chain is Protein MARD1 (263 aa).

The segment at 219-263 (SFLSRCFTCKKNLDQKQDIYIYRGEKGFCSSECRYQEMLLDQMET) adopts an FLZ-type zinc-finger fold.

This sequence belongs to the FLZ family. In terms of assembly, interacts with KIN10 and KIN11 via its FLZ-type zinc finger domain. Interacts with KINB1 and KINB2 via its N-terminal part. Interacts with TZF4, TZF5 and TZF6. Interacts with MPK3 and MPK6.

It is found in the cytoplasm. Its subcellular location is the stress granule. It localises to the P-body. Its function is as follows. May act as an adapter to facilitate the interaction of SnRK1 complex with effector proteins, conferring tissue- and stimulus-type specific differences in the SnRK1 regulation pathway. Involved in seed dormancy control. The protein is Protein MARD1 of Arabidopsis thaliana (Mouse-ear cress).